The sequence spans 786 residues: DNA repair and recombination protein RAD54-like (786 aa).

A required for chromatin remodeling, strand pairing activities and coupling of ATPase activity region spans residues 2 to 9 (RRSLAPSQ). T22 carries the post-translational modification Phosphothreonine. The Helicase ATP-binding domain occupies 165–340 (EGKRGSFNGC…FSLVNFVNPE (176 aa)). 178 to 185 (DEMGLGKT) contributes to the ATP binding site. The DEGH box motif lies at 291–294 (DEGH). Positions 497–654 (LLDFMLAAIR…NNESVEKHFT (158 aa)) constitute a Helicase C-terminal domain. The disordered stretch occupies residues 738 to 786 (EAKPAATTTDEDEELSDSKRKAKKTLASDDDDDEDFVLNCSSGEEFSGF). Positions 776–786 (NCSSGEEFSGF) are enriched in polar residues.

It belongs to the SNF2/RAD54 helicase family. As to quaternary structure, interacts (via N-terminus) with spn-A/Rad51.

The protein resides in the nucleus. Involved in mitotic DNA repair and meiotic recombination. Functions in the recombinational DNA repair pathway. Essential for interhomolog gene conversion (GC), but may have a less important role in intersister GC than spn-A/Rad51. In the presence of DNA, spn-A/Rad51 enhances the ATPase activity of okr/Rad54. The protein is DNA repair and recombination protein RAD54-like of Drosophila grimshawi (Hawaiian fruit fly).